The following is a 524-amino-acid chain: Cytochrome P450 4F12 (524 aa).

2 helical membrane passes run 19 to 39 and 87 to 107; these read WLLL…AWTY and GFTV…PDTI. Heme is bound at residue Cys-468.

It belongs to the cytochrome P450 family. Heme serves as cofactor. Expressed in small intestine, liver, colon and heart.

The protein resides in the endoplasmic reticulum membrane. The protein localises to the microsome membrane. It catalyses the reaction an organic molecule + reduced [NADPH--hemoprotein reductase] + O2 = an alcohol + oxidized [NADPH--hemoprotein reductase] + H2O + H(+). The catalysed reaction is (5Z,8Z,11Z,14Z)-eicosatetraenoate + reduced [NADPH--hemoprotein reductase] + O2 = 18-hydroxy-(5Z,8Z,11Z,14Z)-eicosatetraenoate + oxidized [NADPH--hemoprotein reductase] + H2O + H(+). The enzyme catalyses (7Z,10Z,13Z,16Z,19Z)-docosapentaenoate + reduced [NADPH--hemoprotein reductase] + O2 = 10,11-epoxy-(7Z,13Z,16Z,19Z)-docosatetraenoate + oxidized [NADPH--hemoprotein reductase] + H2O + H(+). It carries out the reaction (7Z,10Z,13Z,16Z,19Z)-docosapentaenoate + reduced [NADPH--hemoprotein reductase] + O2 = 13,14-epoxy-(7Z,10Z,16Z,19Z)-docosatetraenoate + oxidized [NADPH--hemoprotein reductase] + H2O + H(+). It catalyses the reaction (7Z,10Z,13Z,16Z,19Z)-docosapentaenoate + reduced [NADPH--hemoprotein reductase] + O2 = 16,17-epoxy-(7Z,10Z,13Z,19Z)-docosatetraenoate + oxidized [NADPH--hemoprotein reductase] + H2O + H(+). The catalysed reaction is (7Z,10Z,13Z,16Z,19Z)-docosapentaenoate + reduced [NADPH--hemoprotein reductase] + O2 = 19,20-epoxy-(7Z,10Z,13Z,16Z)-docosatetraenoate + oxidized [NADPH--hemoprotein reductase] + H2O + H(+). The enzyme catalyses (4Z,7Z,10Z,13Z,16Z,19Z)-docosahexaenoate + reduced [NADPH--hemoprotein reductase] + O2 = 10,11-epoxy-(4Z,7Z,13Z,16Z,19Z)-docosapentaenoate + oxidized [NADPH--hemoprotein reductase] + H2O + H(+). It carries out the reaction (4Z,7Z,10Z,13Z,16Z,19Z)-docosahexaenoate + reduced [NADPH--hemoprotein reductase] + O2 = 13,14-epoxy-(4Z,7Z,10Z,16Z,19Z)-docosapentaenoate + oxidized [NADPH--hemoprotein reductase] + H2O + H(+). It catalyses the reaction (4Z,7Z,10Z,13Z,16Z,19Z)-docosahexaenoate + reduced [NADPH--hemoprotein reductase] + O2 = 16,17-epoxy-(4Z,7Z,10Z,13Z,19Z)-docosapentaenoate + oxidized [NADPH--hemoprotein reductase] + H2O + H(+). The catalysed reaction is (4Z,7Z,10Z,13Z,16Z,19Z)-docosahexaenoate + reduced [NADPH--hemoprotein reductase] + O2 = 19,20-epoxy-(4Z,7Z,10Z,13Z,16Z)-docosapentaenoate + oxidized [NADPH--hemoprotein reductase] + H2O + H(+). It participates in lipid metabolism; arachidonate metabolism. Functionally, a cytochrome P450 monooxygenase involved in the metabolism of endogenous polyunsaturated fatty acids (PUFAs). Mechanistically, uses molecular oxygen inserting one oxygen atom into a substrate, and reducing the second into a water molecule, with two electrons provided by NADPH via cytochrome P450 reductase (CPR; NADPH-ferrihemoprotein reductase). Catalyzes the hydroxylation of carbon hydrogen bonds, with preference for omega-2 position. Metabolizes (5Z,8Z,11Z,14Z)-eicosatetraenoic acid (arachidonate) toward 18-hydroxy arachidonate. Catalyzes the epoxidation of double bonds of PUFAs such as docosapentaenoic and docosahexaenoic acids. Has low omega-hydroxylase activity toward leukotriene B4 and arachidonate. Involved in the metabolism of xenobiotics. Catalyzes the hydroxylation of the antihistamine drug ebastine. This Homo sapiens (Human) protein is Cytochrome P450 4F12.